We begin with the raw amino-acid sequence, 289 residues long: Shikimate dehydrogenase (NADP(+)) (289 aa).

Shikimate contacts are provided by residues 20 to 22 (SIS) and Ser67. Residue Lys71 is the Proton acceptor of the active site. 2 residues coordinate shikimate: Asn92 and Asp107. NADP(+) is bound by residues 132 to 136 (GGGGA) and Val230. A shikimate-binding site is contributed by Tyr232. Residue Gly253 participates in NADP(+) binding.

Belongs to the shikimate dehydrogenase family. As to quaternary structure, homodimer.

The catalysed reaction is shikimate + NADP(+) = 3-dehydroshikimate + NADPH + H(+). Its pathway is metabolic intermediate biosynthesis; chorismate biosynthesis; chorismate from D-erythrose 4-phosphate and phosphoenolpyruvate: step 4/7. Involved in the biosynthesis of the chorismate, which leads to the biosynthesis of aromatic amino acids. Catalyzes the reversible NADPH linked reduction of 3-dehydroshikimate (DHSA) to yield shikimate (SA). The sequence is that of Shikimate dehydrogenase (NADP(+)) from Streptococcus mutans serotype c (strain ATCC 700610 / UA159).